The primary structure comprises 616 residues: Methionine--tRNA ligase, chloroplastic/mitochondrial (616 aa).

The 'HIGH' region signature appears at 78–88 (YYVNAPPHMGS). The short motif at 366–370 (KMGKS) is the 'KMSKS' region element. Residue lysine 369 coordinates ATP. Basic and acidic residues predominate over residues 582-593 (LNPEKEEDEKKP). The tract at residues 582 to 602 (LNPEKEEDEKKPKVGKKTGKA) is disordered.

Belongs to the class-I aminoacyl-tRNA synthetase family.

The protein localises to the plastid. It is found in the chloroplast. The protein resides in the mitochondrion. The catalysed reaction is tRNA(Met) + L-methionine + ATP = L-methionyl-tRNA(Met) + AMP + diphosphate. The protein is Methionine--tRNA ligase, chloroplastic/mitochondrial of Arabidopsis thaliana (Mouse-ear cress).